The sequence spans 224 residues: MSASASTAADFVRFALDEGVLRFGSFKVKSGRISPYFFNAGLFNSGRSVGALAGFYAQALVDSGVAFDMLFGPAYKGIPLATATSVALAGHRAMAGRDVPFAFNRKEAKDHGEGGTLVGAPLTGKVVIIDDVITAGTSVRESVEIIRAAGAEPAAVLIALDRMERAGPDDALSPHSAVQDVARTYGIPVVSIASLADIMTLLQDDAQFAEHREAVQAYRSKYGV.

Residue lysine 29 coordinates 5-phospho-alpha-D-ribose 1-diphosphate. 37 to 38 (FF) contributes to the orotate binding site. 5-phospho-alpha-D-ribose 1-diphosphate contacts are provided by residues 75–76 (YK), arginine 105, lysine 106, lysine 109, histidine 111, and 130–138 (DDVITAGTS). 2 residues coordinate orotate: threonine 134 and arginine 162.

It belongs to the purine/pyrimidine phosphoribosyltransferase family. PyrE subfamily. As to quaternary structure, homodimer. Mg(2+) is required as a cofactor.

It carries out the reaction orotidine 5'-phosphate + diphosphate = orotate + 5-phospho-alpha-D-ribose 1-diphosphate. It participates in pyrimidine metabolism; UMP biosynthesis via de novo pathway; UMP from orotate: step 1/2. In terms of biological role, catalyzes the transfer of a ribosyl phosphate group from 5-phosphoribose 1-diphosphate to orotate, leading to the formation of orotidine monophosphate (OMP). This is Orotate phosphoribosyltransferase from Bordetella bronchiseptica (strain ATCC BAA-588 / NCTC 13252 / RB50) (Alcaligenes bronchisepticus).